The primary structure comprises 443 residues: Chromosomal replication initiator protein DnaA (443 aa).

Residues 1 to 76 (METKALWEKL…KSVLNSYVSV (76 aa)) are domain I, interacts with DnaA modulators. A domain II region spans residues 76 to 99 (VDFLTKEIFEKNTKKENKKEPINT). Residues 100-320 (VLSENALTFE…GLVNRLLFFG (221 aa)) form a domain III, AAA+ region region. Residues Gly-145, Gly-147, Lys-148, and Thr-149 each coordinate ATP. The domain IV, binds dsDNA stretch occupies residues 321 to 443 (IQNDLGHIID…ESLKNEIIGK (123 aa)).

Belongs to the DnaA family. Oligomerizes as a right-handed, spiral filament on DNA at oriC.

It is found in the cytoplasm. In terms of biological role, plays an essential role in the initiation and regulation of chromosomal replication. ATP-DnaA binds to the origin of replication (oriC) to initiate formation of the DNA replication initiation complex once per cell cycle. Binds the DnaA box (a 9 base pair repeat at the origin) and separates the double-stranded (ds)DNA. Forms a right-handed helical filament on oriC DNA; dsDNA binds to the exterior of the filament while single-stranded (ss)DNA is stabiized in the filament's interior. The ATP-DnaA-oriC complex binds and stabilizes one strand of the AT-rich DNA unwinding element (DUE), permitting loading of DNA polymerase. After initiation quickly degrades to an ADP-DnaA complex that is not apt for DNA replication. Binds acidic phospholipids. The protein is Chromosomal replication initiator protein DnaA of Mesoplasma florum (strain ATCC 33453 / NBRC 100688 / NCTC 11704 / L1) (Acholeplasma florum).